The following is a 479-amino-acid chain: Ribulose bisphosphate carboxylase large chain 2 (479 aa).

Substrate-binding residues include N116 and T166. Residue K168 is the Proton acceptor of the active site. K170 contributes to the substrate binding site. Mg(2+) contacts are provided by K194, D196, and E197. K194 is modified (N6-carboxylysine). The active-site Proton acceptor is the H287. Substrate is bound by residues R288, H320, and S372.

Belongs to the RuBisCO large chain family. Type I subfamily. In terms of assembly, heterohexadecamer of 8 large chains and 8 small chains. The cofactor is Mg(2+).

It catalyses the reaction 2 (2R)-3-phosphoglycerate + 2 H(+) = D-ribulose 1,5-bisphosphate + CO2 + H2O. The catalysed reaction is D-ribulose 1,5-bisphosphate + O2 = 2-phosphoglycolate + (2R)-3-phosphoglycerate + 2 H(+). In terms of biological role, ruBisCO catalyzes two reactions: the carboxylation of D-ribulose 1,5-bisphosphate, the primary event in carbon dioxide fixation, as well as the oxidative fragmentation of the pentose substrate. Both reactions occur simultaneously and in competition at the same active site. The sequence is that of Ribulose bisphosphate carboxylase large chain 2 from Bradyrhizobium sp. (strain BTAi1 / ATCC BAA-1182).